A 465-amino-acid chain; its full sequence is UDP-glycosyltransferase 89A2 (465 aa).

Residues serine 291, 342 to 344, 359 to 367, and 381 to 384 each bind UDP-alpha-D-glucose; these read VSQ, HCGWNSVLE, and EADQ.

Belongs to the UDP-glycosyltransferase family.

Its function is as follows. Glucosyltransferase that glucosylates benzoates and benzoate derivatives in vitro. In Arabidopsis thaliana (Mouse-ear cress), this protein is UDP-glycosyltransferase 89A2 (UGT89A2).